The sequence spans 313 residues: Metal ABC transporter substrate-binding lipoprotein (313 aa).

The N-terminal stretch at 1–23 is a signal peptide; it reads MIEKYKNILITFIALAAIVFLVG. Residue Cys24 is the site of N-palmitoyl cysteine attachment. Cys24 carries S-diacylglycerol cysteine lipidation. Residues His71, His143, Glu209, and Asp284 each coordinate Zn(2+).

The protein belongs to the bacterial solute-binding protein 9 family. Lipoprotein receptor antigen (Lrai) subfamily.

Its subcellular location is the cell membrane. Functionally, part of an ATP-driven transport system for a metal; probably for manganese. The protein is Metal ABC transporter substrate-binding lipoprotein (mtsA) of Lactococcus lactis subsp. lactis (strain IL1403) (Streptococcus lactis).